A 78-amino-acid chain; its full sequence is NAD(P)H-quinone oxidoreductase subunit O (78 aa).

The protein belongs to the complex I NdhO subunit family. NDH-1 can be composed of about 15 different subunits; different subcomplexes with different compositions have been identified which probably have different functions.

Its subcellular location is the cellular thylakoid membrane. It catalyses the reaction a plastoquinone + NADH + (n+1) H(+)(in) = a plastoquinol + NAD(+) + n H(+)(out). It carries out the reaction a plastoquinone + NADPH + (n+1) H(+)(in) = a plastoquinol + NADP(+) + n H(+)(out). In terms of biological role, NDH-1 shuttles electrons from an unknown electron donor, via FMN and iron-sulfur (Fe-S) centers, to quinones in the respiratory and/or the photosynthetic chain. The immediate electron acceptor for the enzyme in this species is believed to be plastoquinone. Couples the redox reaction to proton translocation, and thus conserves the redox energy in a proton gradient. Cyanobacterial NDH-1 also plays a role in inorganic carbon-concentration. The sequence is that of NAD(P)H-quinone oxidoreductase subunit O from Prochlorococcus marinus (strain MIT 9312).